A 430-amino-acid polypeptide reads, in one-letter code: KIN17-like protein (430 aa).

The segment at Cys-28–His-50 adopts a C2H2-type zinc-finger fold. The interval Gln-51–Lys-160 is winged helix-turn-helix (wHTH). Residues Glu-147–Ser-183 adopt a coiled-coil conformation. Residues Lys-155–Arg-158 carry the Nuclear localization signal (NLS) motif. Disordered regions lie at residues Arg-179–Ala-230 and Glu-261–Ala-284. The segment covering Leu-191–Ala-224 has biased composition (acidic residues). A compositionally biased stretch (basic and acidic residues) spans Glu-261–Lys-278. The stretch at Asp-283–Lys-312 forms a coiled coil. Residues Gly-319–Thr-370 are C-terminal subdomain A. Residues Gly-376–Lys-427 are C-terminal subdomain B.

It belongs to the KIN17 family.

Its subcellular location is the nucleus. The chain is KIN17-like protein from Oryza sativa subsp. japonica (Rice).